We begin with the raw amino-acid sequence, 285 residues long: K88 fimbrial protein AB (285 aa).

Residues 1–21 (MKKTLIALAIAASAASGMAHA) form the signal peptide.

It belongs to the fimbrial K88 protein family. K88 fimbria, 0.1-1 micrometer in length and 7 nanometers in diameter, is composed of about 100 identical subunits.

It localises to the fimbrium. Functionally, K88 major fimbrial subunit. Fimbriae (also called pili), are polar filaments radiating from the surface of the bacterium to a length of 0.5-1.5 micrometers and numbering 100-300 per cell. They enable bacteria to colonize the epithelium of specific host organs. In Escherichia coli, this protein is K88 fimbrial protein AB (faeG).